The following is a 328-amino-acid chain: L-lactate dehydrogenase (328 aa).

NAD(+) contacts are provided by residues valine 18, glutamate 39, lysine 46, tyrosine 71, and 85–86; that span reads GA. Residues glutamine 88 and arginine 94 each coordinate substrate. NAD(+)-binding positions include serine 107, 124–126, and serine 149; that span reads AAN. 126–129 provides a ligand contact to substrate; that stretch reads NPVD. 154 to 157 is a substrate binding site; sequence DSAR. Arginine 159 and histidine 174 together coordinate beta-D-fructose 1,6-bisphosphate. Residue histidine 181 is the Proton acceptor of the active site. At tyrosine 226 the chain carries Phosphotyrosine. Threonine 235 serves as a coordination point for substrate.

The protein belongs to the LDH/MDH superfamily. LDH family. Homotetramer.

Its subcellular location is the cytoplasm. The catalysed reaction is (S)-lactate + NAD(+) = pyruvate + NADH + H(+). It functions in the pathway fermentation; pyruvate fermentation to lactate; (S)-lactate from pyruvate: step 1/1. Its activity is regulated as follows. Allosterically activated by fructose 1,6-bisphosphate (FBP). Functionally, catalyzes the conversion of lactate to pyruvate. This is L-lactate dehydrogenase from Streptococcus pneumoniae (strain ATCC BAA-255 / R6).